The chain runs to 336 residues: Cell division protein ZipA (336 aa).

Over Met-1–Leu-6 the chain is Periplasmic. Residues Val-7–Ile-27 traverse the membrane as a helical segment. The Cytoplasmic segment spans residues Arg-28–Val-336. Disordered stretches follow at residues Gln-31–Ala-118 and Tyr-174–Gly-200. The segment covering Leu-73 to Ser-91 has biased composition (polar residues). The segment covering Thr-108 to Ala-118 has biased composition (basic and acidic residues). Over residues Gln-179–Pro-193 the composition is skewed to low complexity.

It belongs to the ZipA family. Interacts with FtsZ via their C-terminal domains.

Its subcellular location is the cell inner membrane. Functionally, essential cell division protein that stabilizes the FtsZ protofilaments by cross-linking them and that serves as a cytoplasmic membrane anchor for the Z ring. Also required for the recruitment to the septal ring of downstream cell division proteins. The sequence is that of Cell division protein ZipA from Shewanella denitrificans (strain OS217 / ATCC BAA-1090 / DSM 15013).